Here is a 201-residue protein sequence, read N- to C-terminus: Extracellular superoxide dismutase [Cu-Zn] (201 aa).

Positions 1 to 42 are cleaved as a signal peptide; that stretch reads MINSFIVIFLSFLIFINYANLVCVEATHVYGRRSHSNGMHGN. Residues histidine 89, histidine 91, and histidine 106 each contribute to the Cu cation site. Cysteine 100 and cysteine 192 are disulfide-bonded. The Zn(2+) site is built by histidine 106, histidine 114, histidine 123, and aspartate 126. Histidine 163 provides a ligand contact to Cu cation.

It belongs to the Cu-Zn superoxide dismutase family. In terms of assembly, homodimer. It depends on Cu cation as a cofactor. Zn(2+) serves as cofactor.

It localises to the secreted. The protein resides in the extracellular space. The enzyme catalyses 2 superoxide + 2 H(+) = H2O2 + O2. Destroys radicals which are normally produced within the cells and which are toxic to biological systems. May act in the parasite defense against phagocyte-generated reactive oxygen species. The chain is Extracellular superoxide dismutase [Cu-Zn] (sod-4) from Onchocerca volvulus.